A 1052-amino-acid chain; its full sequence is Error-prone DNA polymerase (1052 aa).

The protein belongs to the DNA polymerase type-C family. DnaE2 subfamily.

The protein localises to the cytoplasm. It carries out the reaction DNA(n) + a 2'-deoxyribonucleoside 5'-triphosphate = DNA(n+1) + diphosphate. In terms of biological role, DNA polymerase involved in damage-induced mutagenesis and translesion synthesis (TLS). It is not the major replicative DNA polymerase. This Bordetella parapertussis (strain 12822 / ATCC BAA-587 / NCTC 13253) protein is Error-prone DNA polymerase.